Consider the following 431-residue polypeptide: Histidine--tRNA ligase (431 aa).

The protein belongs to the class-II aminoacyl-tRNA synthetase family. In terms of assembly, homodimer.

It localises to the cytoplasm. It carries out the reaction tRNA(His) + L-histidine + ATP = L-histidyl-tRNA(His) + AMP + diphosphate + H(+). The protein is Histidine--tRNA ligase of Finegoldia magna (strain ATCC 29328 / DSM 20472 / WAL 2508) (Peptostreptococcus magnus).